A 467-amino-acid chain; its full sequence is Putative pentatricopeptide repeat-containing protein At1g10330 (467 aa).

PPR repeat units lie at residues 50–84 (TKCVYNTLIRSYLTTGEYKTSLALFTHMLASHVQP), 85–119 (NNLTFPSLIKAACSSFSVSYGVALHGQALKRGFLW), 120–150 (DPFVQTSFVRFYGEVGDLESSRKMFDDILNP), 151–181 (CVVACNSLLDACGRNGEMDYAFEYFQRMPVT), 182–216 (DVVSWTTVINGFSKKGLHAKALMVFGEMIQNERAV), 220–256 (NEATFVSVLSSCANFDQGGIRLGKQIHGYVMSKEIIL), 257–287 (TTTLGTALLDMYGKAGDLEMALTIFDQIRDK), 288–322 (KVCAWNAIISALASNGRPKQALEMFEMMKSSYVHP), 323–358 (NGITLLAILTACARSKLVDLGIQLFSSICSEYKIIP), and 359–389 (TSEHYGCVVDLIGRAGLLVDAANFIQSLPFE). The interval 394 to 467 (VLGALLGACK…RKIPAYSVLT (74 aa)) is type E motif; degenerate.

It belongs to the PPR family. PCMP-E subfamily.

The protein is Putative pentatricopeptide repeat-containing protein At1g10330 (PCMP-E71) of Arabidopsis thaliana (Mouse-ear cress).